Here is a 753-residue protein sequence, read N- to C-terminus: 5-methyltetrahydropteroyltriglutamate--homocysteine methyltransferase (753 aa).

5-methyltetrahydropteroyltri-L-glutamate-binding positions include 17 to 20 and Lys117; that span reads RELK. L-homocysteine-binding positions include 431 to 433 and Glu484; that span reads IGS. Residues 431 to 433 and Glu484 each bind L-methionine; that span reads IGS. Residues 515–516 and Trp561 each bind 5-methyltetrahydropteroyltri-L-glutamate; that span reads RC. Asp599 contributes to the L-homocysteine binding site. Asp599 contacts L-methionine. A 5-methyltetrahydropteroyltri-L-glutamate-binding site is contributed by Glu605. Zn(2+)-binding residues include His641, Cys643, and Glu665. Catalysis depends on His694, which acts as the Proton donor. A Zn(2+)-binding site is contributed by Cys726.

This sequence belongs to the vitamin-B12 independent methionine synthase family. It depends on Zn(2+) as a cofactor.

It carries out the reaction 5-methyltetrahydropteroyltri-L-glutamate + L-homocysteine = tetrahydropteroyltri-L-glutamate + L-methionine. Its pathway is amino-acid biosynthesis; L-methionine biosynthesis via de novo pathway; L-methionine from L-homocysteine (MetE route): step 1/1. Its function is as follows. Catalyzes the transfer of a methyl group from 5-methyltetrahydrofolate to homocysteine resulting in methionine formation. This is 5-methyltetrahydropteroyltriglutamate--homocysteine methyltransferase from Escherichia coli O1:K1 / APEC.